The primary structure comprises 260 residues: Phytolongin Phyl2.1 (260 aa).

A Longin domain is found at 12–114; sequence CIAKGTVILA…LDNPTQHCLQ (103 aa). A helical; Anchor for type IV membrane protein transmembrane segment spans residues 231 to 251; sequence WIVLMFDLCICLVLFGIWLWI.

It belongs to the synaptobrevin family.

The protein resides in the membrane. Its function is as follows. Non-SNARE longin protein involved in membrane-trafficking machinery. The polypeptide is Phytolongin Phyl2.1 (Arabidopsis thaliana (Mouse-ear cress)).